Consider the following 293-residue polypeptide: MATH domain and coiled-coil domain-containing protein At3g58400 (293 aa).

In terms of domain architecture, MATH spans 3 to 126 (RSRSQNLITE…NGELKIVAEI (124 aa)). Positions 227-285 (KLDWLENKLYEVAQKKEDDEAGETRLREMEEKLKDLKLKCSKMEALVEEEKAKVSAAKA) form a coiled coil.

This is MATH domain and coiled-coil domain-containing protein At3g58400 from Arabidopsis thaliana (Mouse-ear cress).